We begin with the raw amino-acid sequence, 268 residues long: Interleukin-1 alpha (268 aa).

The propeptide occupies 1–112 (MAKVPDLFED…DTEEEIIKPR (112 aa)). At Lys82 the chain carries N6-acetyllysine. Residues 82-86 (KKRRL) are nuclear localization signal (NLS). The residue at position 87 (Ser87) is a Phosphoserine. Asn102 and Asn141 each carry an N-linked (GlcNAc...) asparagine glycan.

It belongs to the IL-1 family. In terms of assembly, monomer. Interacts with TMED10; the interaction mediates the translocation from the cytoplasm into the ERGIC (endoplasmic reticulum-Golgi intermediate compartment) and thereby secretion. Interacts with IL1R1. Interacts with S100A13; this interaction is the first step in the export of IL1A, followed by direct translocation of this complex across the plasma membrane. Post-translationally, acetylated within its nuclear localization sequence, which impacts subcellular localization. Proteolytic processed by CAPN1 in a calcium-dependent manner. Cleavage from 31 kDa precursor to 18 kDa biologically active molecules. In terms of processing, phosphorylated. Phosphorylation greatly enhances susceptibility to digestion and promotes the conversion of pre-IL1A alpha to the biologically active IL1A.

It localises to the nucleus. It is found in the cytoplasm. The protein localises to the secreted. Its function is as follows. Cytokine constitutively present intracellularly in nearly all resting non-hematopoietic cells that plays an important role in inflammation and bridges the innate and adaptive immune systems. After binding to its receptor IL1R1 together with its accessory protein IL1RAP, forms the high affinity interleukin-1 receptor complex. Signaling involves the recruitment of adapter molecules such as MYD88, IRAK1 or IRAK4. In turn, mediates the activation of NF-kappa-B and the three MAPK pathways p38, p42/p44 and JNK pathways. Within the cell, acts as an alarmin and cell death results in its liberation in the extracellular space after disruption of the cell membrane to induce inflammation and alert the host to injury or damage. In addition to its role as a danger signal, which occurs when the cytokine is passively released by cell necrosis, directly senses DNA damage and acts as signal for genotoxic stress without loss of cell integrity. The protein is Interleukin-1 alpha (IL1A) of Capra hircus (Goat).